The sequence spans 438 residues: Telomeric repeat-binding factor 1 (438 aa).

Over residues 1 to 10 the composition is skewed to polar residues; sequence MAEDVSSTAP. The tract at residues 1-36 is disordered; the sequence is MAEDVSSTAPSPRGCADGRDADPTEEQMAQTQRNDQ. At A2 the chain carries N-acetylalanine. Phosphoserine is present on S11. Positions 58–268 are TRFH dimerization; that stretch reads EEEEEDSGLV…AAAKVVESKR (211 aa). K213 is covalently cross-linked (Glycyl lysine isopeptide (Lys-Gly) (interchain with G-Cter in SUMO2)). Phosphoserine; by ATM is present on S219. Residues 265-378 form an interaction with RLIM region; that stretch reads ESKRTRTITS…PVTPEKHRAR (114 aa). Residues 268-311 are disordered; it reads RTRTITSQDKPSGNDVEMETEANLDTRKSVSDKQSAVTESSEGT. The span at 299-311 shows a compositional bias: polar residues; that stretch reads DKQSAVTESSEGT. Residue K325 forms a Glycyl lysine isopeptide (Lys-Gly) (interchain with G-Cter in SUMO2) linkage. The tract at residues 326–375 is disordered; it reads LQHGTQQQDLNKKERRVGTPQSTKKKKESRRATESRIPVSKSQPVTPEKH. A Nuclear localization signal motif is present at residues 337–356; sequence KKERRVGTPQSTKKKKESRR. K366 participates in a covalent cross-link: Glycyl lysine isopeptide (Lys-Gly) (interchain with G-Cter in SUMO2). An HTH myb-type domain is found at 375-432; it reads HRARKRQAWLWEEDKNLRSGVRKYGEGNWSKILLHYKFNNRTSVMLKDRWRTMKKLKL. The H-T-H motif DNA-binding region spans 403–428; the sequence is WSKILLHYKFNNRTSVMLKDRWRTMK.

As to quaternary structure, homodimer; can contain both isoforms. Found in a complex with POT1; TINF2 and TNKS1. Interacts with ATM, TINF2, TNKS1, TNKS2, PINX1, NEK2 and MAPRE1. Component of the shelterin complex (telosome) composed of TERF1, TERF2, TINF2, TERF2IP ACD and POT1. Interacts with RLIM (via N-terminus). Interacts with FBXO4. Interaction with TINF2 protects against interaction with FBXO4 and subsequent polyubiquitination and proteasomal degradation. Interacts with GNL3L; this interaction promotes homodimerization. Interacts with TIN2. Interactions with GNL3L and TIN2 are mutually exclusive. Interacts with RTEL1. Interacts with CCDC79/TERB1. Post-translationally, phosphorylated preferentially on Ser-219 in an ATM-dependent manner in response to ionizing DNA damage. In terms of processing, ADP-ribosylation by TNKS1 or TNKS2 diminishes its ability to bind to telomeric DNA. Ubiquitinated by RLIM/RNF12, leading to its degradation by the proteasome. Ubiquitinated by a SCF (SKP1-CUL1-F-box protein) ubiquitin-protein ligase complex, leading to its degradation by the proteasome.

The protein localises to the nucleus. The protein resides in the chromosome. It localises to the telomere. Its subcellular location is the cytoplasm. It is found in the cytoskeleton. The protein localises to the spindle. Binds the telomeric double-stranded 5'-TTAGGG-3' repeat and negatively regulates telomere length. Involved in the regulation of the mitotic spindle. Component of the shelterin complex (telosome) that is involved in the regulation of telomere length and protection. Shelterin associates with arrays of double-stranded 5'-TTAGGG-3' repeats added by telomerase and protects chromosome ends; without its protective activity, telomeres are no longer hidden from the DNA damage surveillance and chromosome ends are inappropriately processed by DNA repair pathways. The protein is Telomeric repeat-binding factor 1 (TERF1) of Cricetulus griseus (Chinese hamster).